The chain runs to 75 residues: UPF0235 protein Mflv_3569 (75 aa).

The protein belongs to the UPF0235 family.

The sequence is that of UPF0235 protein Mflv_3569 from Mycolicibacterium gilvum (strain PYR-GCK) (Mycobacterium gilvum (strain PYR-GCK)).